We begin with the raw amino-acid sequence, 233 residues long: Cilia- and flagella-associated protein 299 (233 aa).

In terms of tissue distribution, abundantly expressed in testis, specifically in spermatogonia and primary spermatocytes but not in secondary spermatocytes and spermatids.

Its subcellular location is the cytoplasm. It is found in the nucleus. Its function is as follows. May be involved in spermatogenesis. In Mus musculus (Mouse), this protein is Cilia- and flagella-associated protein 299.